We begin with the raw amino-acid sequence, 259 residues long: Proteasome subunit alpha (259 aa).

The segment at 226–259 is disordered; sequence LAEGSATSATSATPGEAEAPATAPEGDVDTGSNG. The segment covering 227 to 250 has biased composition (low complexity); the sequence is AEGSATSATSATPGEAEAPATAPE.

This sequence belongs to the peptidase T1A family. As to quaternary structure, the 20S proteasome core is composed of 14 alpha and 14 beta subunits that assemble into four stacked heptameric rings, resulting in a barrel-shaped structure. The two inner rings, each composed of seven catalytic beta subunits, are sandwiched by two outer rings, each composed of seven alpha subunits. The catalytic chamber with the active sites is on the inside of the barrel. Has a gated structure, the ends of the cylinder being occluded by the N-termini of the alpha-subunits. Is capped by the proteasome-associated ATPase, ARC.

It is found in the cytoplasm. It functions in the pathway protein degradation; proteasomal Pup-dependent pathway. The formation of the proteasomal ATPase ARC-20S proteasome complex, likely via the docking of the C-termini of ARC into the intersubunit pockets in the alpha-rings, may trigger opening of the gate for substrate entry. Interconversion between the open-gate and close-gate conformations leads to a dynamic regulation of the 20S proteasome proteolysis activity. In terms of biological role, component of the proteasome core, a large protease complex with broad specificity involved in protein degradation. This Streptosporangium roseum (strain ATCC 12428 / DSM 43021 / JCM 3005 / KCTC 9067 / NCIMB 10171 / NRRL 2505 / NI 9100) protein is Proteasome subunit alpha.